Here is a 484-residue protein sequence, read N- to C-terminus: Phosphatidylinositol N-acetylglucosaminyltransferase subunit A (484 aa).

Topologically, residues 1 to 421 (MACRGGAGNG…RLDRLISHCG (421 aa)) are cytoplasmic. Ser-21 and Ser-24 each carry phosphoserine. The helical transmembrane segment at 422 to 442 (PVTGYIFALLAVFNFLFLIFL) threads the bilayer. The Lumenal portion of the chain corresponds to 443-484 (RWMTPDSIIDVAIDATGPRGAWTNNYSHSKRGGENNEISETR). An N-linked (GlcNAc...) asparagine glycan is attached at Asn-467.

Belongs to the glycosyltransferase group 1 family. Glycosyltransferase 4 subfamily. Component of the glycosylphosphatidylinositol-N-acetylglucosaminyltransferase (GPI-GnT) complex composed at least by PIGA, PIGC, PIGH, PIGP, PIGQ, PIGY and DPM2. Interacts with PIGC, PIGH, PIGP, PIGQ and DPM2. Interacts directly with PIGY; this interaction regulates glycosylphosphatidylinositol-N-acetylglucosaminyltransferase activity. Interacts with PIGQ.

The protein resides in the endoplasmic reticulum membrane. It catalyses the reaction a 1,2-diacyl-sn-glycero-3-phospho-(1D-myo-inositol) + UDP-N-acetyl-alpha-D-glucosamine = a 6-(N-acetyl-alpha-D-glucosaminyl)-1-(1,2-diacyl-sn-glycero-3-phospho)-1D-myo-inositol + UDP + H(+). The protein operates within glycolipid biosynthesis; glycosylphosphatidylinositol-anchor biosynthesis. Functionally, catalytic subunit of the glycosylphosphatidylinositol-N-acetylglucosaminyltransferase (GPI-GnT) complex that catalyzes the transfer of N-acetylglucosamine from UDP-N-acetylglucosamine to phosphatidylinositol and participates in the first step of GPI biosynthesis. This Homo sapiens (Human) protein is Phosphatidylinositol N-acetylglucosaminyltransferase subunit A.